Reading from the N-terminus, the 344-residue chain is Selenide, water dikinase (344 aa).

Cys16 is an active-site residue. ATP is bound by residues Lys19 and 47–49; that span reads SRD. Residue Asp50 coordinates Mg(2+). Residues Asp67, Asp90, and 138-140 contribute to the ATP site; that span reads GHS. Residue Asp90 participates in Mg(2+) binding. A Mg(2+)-binding site is contributed by Asp226.

This sequence belongs to the selenophosphate synthase 1 family. Class I subfamily. Homodimer. Requires Mg(2+) as cofactor.

The catalysed reaction is hydrogenselenide + ATP + H2O = selenophosphate + AMP + phosphate + 2 H(+). Functionally, synthesizes selenophosphate from selenide and ATP. This chain is Selenide, water dikinase, found in Pseudomonas aeruginosa (strain ATCC 15692 / DSM 22644 / CIP 104116 / JCM 14847 / LMG 12228 / 1C / PRS 101 / PAO1).